Here is a 204-residue protein sequence, read N- to C-terminus: Proteasome subunit beta 2 (204 aa).

A propeptide spans 1–6 (removed in mature form; by autocatalysis); the sequence is MEVLPG. The active-site Nucleophile is Thr-7.

This sequence belongs to the peptidase T1B family. The 20S proteasome core is composed of 14 alpha and 14 beta subunits that assemble into four stacked heptameric rings, resulting in a barrel-shaped structure. The two inner rings, each composed of seven catalytic beta subunits, are sandwiched by two outer rings, each composed of seven alpha subunits. The catalytic chamber with the active sites is on the inside of the barrel. Has a gated structure, the ends of the cylinder being occluded by the N-termini of the alpha-subunits. Is capped at one or both ends by the proteasome regulatory ATPase, PAN.

The protein resides in the cytoplasm. The enzyme catalyses Cleavage of peptide bonds with very broad specificity.. The formation of the proteasomal ATPase PAN-20S proteasome complex, via the docking of the C-termini of PAN into the intersubunit pockets in the alpha-rings, triggers opening of the gate for substrate entry. Interconversion between the open-gate and close-gate conformations leads to a dynamic regulation of the 20S proteasome proteolysis activity. Its function is as follows. Component of the proteasome core, a large protease complex with broad specificity involved in protein degradation. The polypeptide is Proteasome subunit beta 2 (Thermofilum pendens (strain DSM 2475 / Hrk 5)).